We begin with the raw amino-acid sequence, 98 residues long: NADH-ubiquinone oxidoreductase chain 4L (98 aa).

A run of 3 helical transmembrane segments spans residues 1–21 (MSMV…GLLI), 29–49 (SLLC…VTIL), and 61–81 (IILL…LVMV).

It belongs to the complex I subunit 4L family. In terms of assembly, core subunit of respiratory chain NADH dehydrogenase (Complex I) which is composed of 45 different subunits.

The protein resides in the mitochondrion inner membrane. It carries out the reaction a ubiquinone + NADH + 5 H(+)(in) = a ubiquinol + NAD(+) + 4 H(+)(out). Core subunit of the mitochondrial membrane respiratory chain NADH dehydrogenase (Complex I) which catalyzes electron transfer from NADH through the respiratory chain, using ubiquinone as an electron acceptor. Part of the enzyme membrane arm which is embedded in the lipid bilayer and involved in proton translocation. This Taxidea taxus (American badger) protein is NADH-ubiquinone oxidoreductase chain 4L (MT-ND4L).